The following is a 592-amino-acid chain: Aspartate--tRNA(Asp/Asn) ligase (592 aa).

Glutamate 172 lines the L-aspartate pocket. The aspartate stretch occupies residues 196 to 199 (QLFK). Arginine 218 contributes to the L-aspartate binding site. ATP-binding positions include 218–220 (RDE) and glutamine 227. Histidine 442 contributes to the L-aspartate binding site. Glutamate 476 lines the ATP pocket. L-aspartate is bound at residue arginine 483. 528 to 531 (GWDR) lines the ATP pocket. The interval 553–592 (SGTDPLTGAPTPITPEQRKEAGIDADPYAAAGRPPGRQSA) is disordered.

Belongs to the class-II aminoacyl-tRNA synthetase family. Type 1 subfamily. As to quaternary structure, homodimer.

It is found in the cytoplasm. The enzyme catalyses tRNA(Asx) + L-aspartate + ATP = L-aspartyl-tRNA(Asx) + AMP + diphosphate. Its function is as follows. Aspartyl-tRNA synthetase with relaxed tRNA specificity since it is able to aspartylate not only its cognate tRNA(Asp) but also tRNA(Asn). Reaction proceeds in two steps: L-aspartate is first activated by ATP to form Asp-AMP and then transferred to the acceptor end of tRNA(Asp/Asn). The protein is Aspartate--tRNA(Asp/Asn) ligase of Acidothermus cellulolyticus (strain ATCC 43068 / DSM 8971 / 11B).